We begin with the raw amino-acid sequence, 395 residues long: Acid ceramidase (395 aa).

Positions 1-21 (MLGRSRLTFVLLAAAVTCAEA) are cleaved as a signal peptide. A disulfide bridge links Cys-31 with Cys-340. Catalysis depends on Cys-143, which acts as the Nucleophile. Asn-173, Asn-259, Asn-286, and Asn-348 each carry an N-linked (GlcNAc...) asparagine glycan. Cys-388 and Cys-392 are oxidised to a cystine.

Belongs to the acid ceramidase family. In terms of assembly, heterodimer; disulfide-linked. The heterodimer is composed of the disulfide-linked alpha and beta chains produced by autocatalytic cleavage of the precursor. Post-translationally, N-glycosylated. In terms of processing, proteolytically cleaved into two chains alpha and beta that remain associated via a disulfide bond. Cleavage gives rise to a conformation change that activates the enzyme. The same catalytic Cys residue mediates the autoproteolytic cleavage and subsequent hydrolysis of lipid substrates. The beta chain may undergo an additional C-terminal processing.

The protein localises to the lysosome. The protein resides in the secreted. The catalysed reaction is an N-acylsphing-4-enine + H2O = sphing-4-enine + a fatty acid. It carries out the reaction N-dodecanoylsphing-4-enine + H2O = dodecanoate + sphing-4-enine. The enzyme catalyses N-tetradecanoylsphing-4-enine + H2O = tetradecanoate + sphing-4-enine. It catalyses the reaction N-hexadecanoylsphing-4-enine + H2O = sphing-4-enine + hexadecanoate. The catalysed reaction is N-octadecanoylsphing-4-enine + H2O = sphing-4-enine + octadecanoate. It carries out the reaction N-dodecanoyl-(4R)-hydroxysphinganine + H2O = (4R)-hydroxysphinganine + dodecanoate. The enzyme catalyses N-(dodecanoyl)-sphinganine + H2O = dodecanoate + sphinganine. It catalyses the reaction N-(acetyl)-sphing-4-enine + H2O = sphing-4-enine + acetate. The catalysed reaction is N-(hexanoyl)sphing-4-enine + H2O = hexanoate + sphing-4-enine. It carries out the reaction N-octanoylsphing-4-enine + H2O = octanoate + sphing-4-enine. The enzyme catalyses N-(9Z-octadecenoyl)-sphing-4-enine + H2O = sphing-4-enine + (9Z)-octadecenoate. It catalyses the reaction N-dodecanoylethanolamine + H2O = dodecanoate + ethanolamine. Its pathway is lipid metabolism; sphingolipid metabolism. Its function is as follows. Lysosomal ceramidase that hydrolyzes sphingolipid ceramides into sphingosine and free fatty acids at acidic pH. Ceramides, sphingosine, and its phosphorylated form sphingosine-1-phosphate are bioactive lipids that mediate cellular signaling pathways regulating several biological processes including cell proliferation, apoptosis and differentiation. Has a higher catalytic efficiency towards C12-ceramides versus other ceramides. Also catalyzes the reverse reaction allowing the synthesis of ceramides from fatty acids and sphingosine. For the reverse synthetic reaction, the natural sphingosine D-erythro isomer is more efficiently utilized as a substrate compared to D-erythro-dihydrosphingosine and D-erythro-phytosphingosine, while the fatty acids with chain lengths of 12 or 14 carbons are the most efficiently used. Also has an N-acylethanolamine hydrolase activity. By regulating the levels of ceramides, sphingosine and sphingosine-1-phosphate in the epidermis, mediates the calcium-induced differentiation of epidermal keratinocytes. Also indirectly regulates tumor necrosis factor/TNF-induced apoptosis. By regulating the intracellular balance between ceramides and sphingosine, in adrenocortical cells, probably also acts as a regulator of steroidogenesis. This is Acid ceramidase from Heterocephalus glaber (Naked mole rat).